The following is a 282-amino-acid chain: MADSDIIEIKAKLWNGHINLRVVLAYKDQKVEYLCTIYRNSYITLKLPAIVEYFSAFVQGLSSKQLWFEYEGVPIKWNLPVGLLYDYLHLPSLLGNFESSSSWTVYLRYDDYPSDYIIPFIYKKDDGTVDFDRSLKEVIVNQLKQSCFVLNGNSKPIMSLSEANSIQLWVSIVDHNLSAYTSINKKIVPKDKAQKIPVRIFIPGTTTIVQAPIYPYGEEEPTSMRDVLSLHLPHLFAEREAIALPYIHGIDTQSLLDEPLLKTWEIFKHLDNFLYVVVIPRV.

A Glycyl lysine isopeptide (Lys-Gly) (interchain with G-Cter in ATG12) cross-link involves residue Lys144.

Belongs to the ATG5 family. Conjugated with ATG12. Conjugated to ATG12; which is essential for autophagy.

It is found in the preautophagosomal structure membrane. Involved in cytoplasm to vacuole transport (Cvt) and autophagic vesicle formation. Autophagy is essential for maintenance of amino acid levels and protein synthesis under nitrogen starvation. Required for selective autophagic degradation of the nucleus (nucleophagy). Also required for mitophagy, which eliminates defective or superfluous mitochondria in order to fulfill cellular energy requirements and prevent excess ROS production. Conjugation with ATG12, through a ubiquitin-like conjugating system involving ATG7 as an E1-like activating enzyme and ATG10 as an E2-like conjugating enzyme, is essential for its function. The ATG12-ATG5 conjugate acts as an E3-like enzyme which is required for lipidation of ATG8 and ATG8 association to the vesicle membranes. The chain is Autophagy protein 5 (ATG5) from Scheffersomyces stipitis (strain ATCC 58785 / CBS 6054 / NBRC 10063 / NRRL Y-11545) (Yeast).